Consider the following 375-residue polypeptide: Putrescine N-methyltransferase 1 (375 aa).

Polar residues-rich tracts occupy residues 24-50 (HQNG…QNGT) and 57-77 (HQNG…GNEL). A disordered region spans residues 24–77 (HQNGTSEHLNGYQNGTSKHQNGHQNGTFEHRNGHQNGTSEQQNGTISHDNGNEL). The 238-residue stretch at 86-323 (PGWFSEFSAL…GVIGYMLCST (238 aa)) folds into the PABS domain. S-adenosyl-L-methionine contacts are provided by residues Q117, E192, and 223–224 (DG). D242 serves as the catalytic Proton acceptor. Y311 provides a ligand contact to S-adenosyl-L-methionine.

The protein belongs to the class I-like SAM-binding methyltransferase superfamily. Putrescine methyltransferase family. In terms of tissue distribution, predominantly expressed in roots.

It carries out the reaction putrescine + S-adenosyl-L-methionine = N-methylputrescine + S-adenosyl-L-homocysteine + H(+). It participates in alkaloid biosynthesis; nicotine biosynthesis. Its function is as follows. Involved in the biosynthesis of pyridine alkaloid natural products, leading mainly to the production of anabasine, anatabine, nicotine and nornicotine, effective deterrents against herbivores with antiparasitic and pesticide properties (neurotoxins); nornicotine serves as the precursor in the synthesis of the carcinogen compound N'-nitrosonornicotine (NNN). Methyltransferase that mediates the conversion of putrescine to N-methylputrescine. Promotes leaves ripening. The sequence is that of Putrescine N-methyltransferase 1 from Nicotiana tabacum (Common tobacco).